Reading from the N-terminus, the 121-residue chain is Large ribosomal subunit protein bL12 (121 aa).

The protein belongs to the bacterial ribosomal protein bL12 family. In terms of assembly, homodimer. Part of the ribosomal stalk of the 50S ribosomal subunit. Forms a multimeric L10(L12)X complex, where L10 forms an elongated spine to which 2 to 4 L12 dimers bind in a sequential fashion. Binds GTP-bound translation factors.

Functionally, forms part of the ribosomal stalk which helps the ribosome interact with GTP-bound translation factors. Is thus essential for accurate translation. The chain is Large ribosomal subunit protein bL12 from Clostridium novyi (strain NT).